We begin with the raw amino-acid sequence, 259 residues long: Dihydroorotate dehydrogenase B (NAD(+)), electron transfer subunit (259 aa).

Residues 2 to 102 form the FAD-binding FR-type domain; the sequence is MQKQNMIVVN…LGPLGHGFPV (101 aa). FAD-binding positions include 53–56, 70–72, and 77–78; these read RPIS, LYR, and GT. C221, C226, C229, and C246 together coordinate [2Fe-2S] cluster.

The protein belongs to the PyrK family. Heterotetramer of 2 PyrK and 2 PyrD type B subunits. The cofactor is [2Fe-2S] cluster. It depends on FAD as a cofactor.

It functions in the pathway pyrimidine metabolism; UMP biosynthesis via de novo pathway; orotate from (S)-dihydroorotate (NAD(+) route): step 1/1. In terms of biological role, responsible for channeling the electrons from the oxidation of dihydroorotate from the FMN redox center in the PyrD type B subunit to the ultimate electron acceptor NAD(+). This Bacillus cereus (strain ATCC 14579 / DSM 31 / CCUG 7414 / JCM 2152 / NBRC 15305 / NCIMB 9373 / NCTC 2599 / NRRL B-3711) protein is Dihydroorotate dehydrogenase B (NAD(+)), electron transfer subunit.